Here is a 136-residue protein sequence, read N- to C-terminus: uncharacterized protein (136 aa).

Residues 40 to 62 (LFYSISLCVSLLLHISLCVSVYV) traverse the membrane as a helical segment.

The protein localises to the membrane. This is an uncharacterized protein from Homo sapiens (Human).